The primary structure comprises 311 residues: DNA replication terminus site-binding protein (311 aa).

It belongs to the Tus family.

The protein localises to the cytoplasm. In terms of biological role, trans-acting protein required for termination of DNA replication. Binds to DNA replication terminator sequences (terA to terF) to prevent the passage of replication forks. The termination efficiency will be affected by the affinity of this protein for the terminator sequence. The chain is DNA replication terminus site-binding protein from Yersinia pestis.